The chain runs to 438 residues: 23S rRNA (uracil(1939)-C(5))-methyltransferase RlmD (438 aa).

The region spanning 10 to 69 is the TRAM domain; that stretch reads KASVNTKHQSVDVVRLDHNGAGIAFVDKKPVFIEGALPGEKAIIQFIEQKKQFSRAKLIK. [4Fe-4S] cluster contacts are provided by C82, C88, C91, and C169. The S-adenosyl-L-methionine site is built by Q272, F301, N306, E322, N349, and D370. C396 serves as the catalytic Nucleophile.

This sequence belongs to the class I-like SAM-binding methyltransferase superfamily. RNA M5U methyltransferase family. RlmD subfamily.

The enzyme catalyses uridine(1939) in 23S rRNA + S-adenosyl-L-methionine = 5-methyluridine(1939) in 23S rRNA + S-adenosyl-L-homocysteine + H(+). Its function is as follows. Catalyzes the formation of 5-methyl-uridine at position 1939 (m5U1939) in 23S rRNA. The chain is 23S rRNA (uracil(1939)-C(5))-methyltransferase RlmD from Aliivibrio fischeri (strain ATCC 700601 / ES114) (Vibrio fischeri).